Reading from the N-terminus, the 39-residue chain is Non-specific lipid-transfer protein (39 aa).

It belongs to the plant LTP family.

Its function is as follows. Plant non-specific lipid-transfer proteins transfer phospholipids as well as galactolipids across membranes. May play a role in wax or cutin deposition in the cell walls of expanding epidermal cells and certain secretory tissues. The protein is Non-specific lipid-transfer protein of Musa acuminata (Banana).